The chain runs to 251 residues: YlmG homolog protein 2, chloroplastic (251 aa).

The N-terminal 51 residues, 1-51, are a transit peptide targeting the chloroplast; that stretch reads MEASANEPAMKSLKSNPSGPIPNFFVSLSSAFTQTPLVRSNKPNLLLLPPV. 2 helical membrane passes run 119–139 and 183–203; these read GFAA…NGLI and FIPP…VLNA. The span at 232–243 shows a compositional bias: basic residues; it reads VRRRRLSSHKDH. A disordered region spans residues 232 to 251; sequence VRRRRLSSHKDHRPSSASMT.

It belongs to the YggT family.

It is found in the plastid. The protein resides in the chloroplast thylakoid membrane. In terms of biological role, not required for the biogenesis and accumulation of native cytochrome b6 in the thylakoid membrane. Not functionally involved in the pathway for covalent binding of the c-type heme to cytochrome b6. The polypeptide is YlmG homolog protein 2, chloroplastic (Arabidopsis thaliana (Mouse-ear cress)).